Here is a 299-residue protein sequence, read N- to C-terminus: ATP phosphoribosyltransferase (299 aa).

It belongs to the ATP phosphoribosyltransferase family. Long subfamily. The cofactor is Mg(2+).

It localises to the cytoplasm. The catalysed reaction is 1-(5-phospho-beta-D-ribosyl)-ATP + diphosphate = 5-phospho-alpha-D-ribose 1-diphosphate + ATP. Its pathway is amino-acid biosynthesis; L-histidine biosynthesis; L-histidine from 5-phospho-alpha-D-ribose 1-diphosphate: step 1/9. Its activity is regulated as follows. Feedback inhibited by histidine. Its function is as follows. Catalyzes the condensation of ATP and 5-phosphoribose 1-diphosphate to form N'-(5'-phosphoribosyl)-ATP (PR-ATP). Has a crucial role in the pathway because the rate of histidine biosynthesis seems to be controlled primarily by regulation of HisG enzymatic activity. The chain is ATP phosphoribosyltransferase from Shewanella sediminis (strain HAW-EB3).